A 567-amino-acid polypeptide reads, in one-letter code: MEGSPIPVLTVPTAPYEDQRPAGGGGLRRPTGLFEGQRNYLPNFIQSVLSSIDLRDRQGCTMVVGSDGRYFSRTAIEIVVQMAAANGIGRLIIGQNGILSTPAVSCIIRKIKAAGGIILTASHCPGGPGGEFGVKFNVANGGPAPDVVSDKIYQISKTIEEYAICPDLRIDLSRLGRQEFDLENKFKPFRVEIVDPVDIYLNLLRTIFDFHAIKGLLTGPSQLKIRIDAMHGVMGPYVRKVLCDELGAPANSAINCVPLEDFGGQHPDPNLTYATTLLEAMKGGEYGFGAAFDADGDRYMILGQNGFFVSPSDSLAIIAANLSCIPYFRQMGVRGFGRSMPTSMALDRVAKSMKVPVYETPAGWRFFSNLMDSGRCNLCGEESFGTGSDHLREKDGLWAVLVWLSIIAARKQSVEEIVRDHWAKFGRHYYCRFDYEGLDPKTTYYIMRDLEALVTDKSFIGQQFAVGSHVYSVAKTDSFEYVDPVDGTVTKKQGLRIIFSDASRLIFRLSSSSGVRATLRLYAESYERDPSGHDQEPQAVLSPLIAIALKISQIHERTGRRGPTVIT.

The tract at residues 1–26 (MEGSPIPVLTVPTAPYEDQRPAGGGG) is disordered. Threonine 120 carries the phosphothreonine modification. Position 122 is a phosphoserine (serine 122).

Belongs to the phosphohexose mutase family. In terms of assembly, interacts with DMD/dystrophin; the interaction is direct. Interacts with UTRN/utrophin. As to expression, detected in smooth and cardiac muscle at high levels and in skeletal muscle at low level. Present in other tissues due to vascular or other smooth muscle component. Low levels are present in liver, kidney, skin and brain (at protein level).

It localises to the cell junction. The protein resides in the adherens junction. It is found in the cytoplasm. The protein localises to the cytoskeleton. Its subcellular location is the cell membrane. It localises to the sarcolemma. In terms of biological role, component of adherens-type cell-cell and cell-matrix junctions. Has no phosphoglucomutase activity in vitro. This is Phosphoglucomutase-like protein 5 from Homo sapiens (Human).